A 144-amino-acid chain; its full sequence is INO80 complex subunit 5 (144 aa).

Residues 1-58 (MAAQKKQGERVLPARSTRKRRQLPDMLYYDERTDSYVTPQERSLSEANAQTRPAPNTI) form a disordered region. The segment covering 35–58 (SYVTPQERSLSEANAQTRPAPNTI) has biased composition (polar residues).

Component of the INO80 chromatin remodeling complex.

It localises to the nucleus. Functionally, component of the INO80 complex which remodels chromatin by shifting nucleosomes and is involved in DNA repair. The protein is INO80 complex subunit 5 (iec5) of Schizosaccharomyces pombe (strain 972 / ATCC 24843) (Fission yeast).